Reading from the N-terminus, the 571-residue chain is Urease subunit alpha (571 aa).

The region spanning 129 to 571 (GGIDSHIHFI…LPMAQRYFLF (443 aa)) is the Urease domain. Ni(2+) is bound by residues His134, His136, and Lys217. Position 217 is an N6-carboxylysine (Lys217). Position 219 (His219) interacts with substrate. The Ni(2+) site is built by His246 and His272. Catalysis depends on His320, which acts as the Proton donor. Asp360 provides a ligand contact to Ni(2+).

It belongs to the metallo-dependent hydrolases superfamily. Urease alpha subunit family. Heterotrimer of UreA (gamma), UreB (beta) and UreC (alpha) subunits. Three heterotrimers associate to form the active enzyme. It depends on Ni cation as a cofactor. In terms of processing, carboxylation allows a single lysine to coordinate two nickel ions.

The protein resides in the cytoplasm. The catalysed reaction is urea + 2 H2O + H(+) = hydrogencarbonate + 2 NH4(+). It functions in the pathway nitrogen metabolism; urea degradation; CO(2) and NH(3) from urea (urease route): step 1/1. The sequence is that of Urease subunit alpha from Cupriavidus necator (strain ATCC 17699 / DSM 428 / KCTC 22496 / NCIMB 10442 / H16 / Stanier 337) (Ralstonia eutropha).